A 707-amino-acid chain; its full sequence is Alpha-hemolysin translocation ATP-binding protein HlyB (707 aa).

Residues 3–125 form the Peptidase C39 domain; it reads SCHKIDYGLY…ALYQGHIILI (123 aa). His-83 is an active-site residue. The ABC transmembrane type-1 domain occupies 154-436; the sequence is FIETLVVSVF…LAQIWQDFQQ (283 aa). A run of 5 helical transmembrane segments spans residues 158 to 178, 191 to 211, 269 to 289, 295 to 315, and 388 to 408; these read LVVS…FQVV, LNVI…LSGL, ALTS…MWYY, LVIL…SPIL, and VMII…LSIG. The ABC transporter domain occupies 468-703; the sequence is ITFRNIRFRY…PESLYSYLYQ (236 aa). 502–509 provides a ligand contact to ATP; that stretch reads GRSGSGKS.

The protein belongs to the ABC transporter superfamily. Protein-1 exporter (TC 3.A.1.109) family. Homodimer.

It is found in the cell inner membrane. In terms of biological role, part of the ABC transporter complex HlyBD involved in hemolysin export. Transmembrane domains (TMD) form a pore in the inner membrane and the ATP-binding domain (NBD) is responsible for energy generation. The sequence is that of Alpha-hemolysin translocation ATP-binding protein HlyB (hlyB) from Escherichia coli.